We begin with the raw amino-acid sequence, 374 residues long: Nudix hydrolase 20, chloroplastic (374 aa).

The N-terminal 49 residues, 1 to 49 (MASGFCSLALTVTTSLFSSHAITRRVLPILRWRSSSMSLSPLRHSRALS), are a transit peptide targeting the chloroplast. One can recognise a Nudix hydrolase domain in the interval 205 to 346 (GYGVHMNGYV…KANCSLVIID (142 aa)). Positions 244 to 265 (GGLPHGISCGGNLVKECEEEAG) match the Nudix box motif. Mg(2+) contacts are provided by Glu-259 and Glu-263.

Belongs to the Nudix hydrolase family. The cofactor is Mg(2+). Mn(2+) serves as cofactor. As to expression, expressed in leaves and inflorescences.

The protein resides in the plastid. The protein localises to the chloroplast. Its function is as follows. Probably mediates the hydrolysis of some nucleoside diphosphate derivatives. In Arabidopsis thaliana (Mouse-ear cress), this protein is Nudix hydrolase 20, chloroplastic (NUDT20).